The chain runs to 471 residues: Putative pentatricopeptide repeat-containing protein At1g53330 (471 aa).

PPR repeat units follow at residues Ser46 to Pro81, Thr82 to Arg116, Thr117 to Phe147, Asp151 to Pro185, Thr186 to Pro221, Thr222 to Val256, Asp257 to Pro291, Asp292 to Pro326, Asp327 to Pro361, and Asp362 to Pro396.

Belongs to the PPR family. P subfamily.

Involved during embryo development. This Arabidopsis thaliana (Mouse-ear cress) protein is Putative pentatricopeptide repeat-containing protein At1g53330.